We begin with the raw amino-acid sequence, 248 residues long: Probable transcriptional regulatory protein Mpop_0922 (248 aa).

It belongs to the TACO1 family.

The protein localises to the cytoplasm. This is Probable transcriptional regulatory protein Mpop_0922 from Methylorubrum populi (strain ATCC BAA-705 / NCIMB 13946 / BJ001) (Methylobacterium populi).